The primary structure comprises 267 residues: Ras-related protein Rab-36 (267 aa).

GTP contacts are provided by valine 68, glycine 69, lysine 70, threonine 71, serine 72, aspartate 83, tyrosine 86, and threonine 89. Threonine 71 lines the Mg(2+) pocket. The Switch 1 signature appears at 76-94 (RFCKNVFDRDYKATIGVDF). Positions 89 and 112 each coordinate Mg(2+). The Switch 2 motif lies at 113–132 (TAGQEKFKCIASAYYRGAQV). Positions 115, 172, 174, 203, 204, and 205 each coordinate GTP. Positions 243–267 (GDLIQMEGSPPETQESKRPSSLGCC) are disordered. S-geranylgeranyl cysteine attachment occurs at residues cysteine 266 and cysteine 267.

It belongs to the small GTPase superfamily. Rab family. It depends on Mg(2+) as a cofactor. As to expression, ubiquitously present in all tissues examined.

The protein localises to the golgi apparatus membrane. The catalysed reaction is GTP + H2O = GDP + phosphate + H(+). With respect to regulation, regulated by guanine nucleotide exchange factors (GEFs) which promote the exchange of bound GDP for free GTP. Regulated by GTPase activating proteins (GAPs) which increase the GTP hydrolysis activity. Inhibited by GDP dissociation inhibitors (GDIs). The small GTPases Rab are key regulators of intracellular membrane trafficking, from the formation of transport vesicles to their fusion with membranes. Rabs cycle between an inactive GDP-bound form and an active GTP-bound form that is able to recruit to membranes different sets of downstream effectors directly responsible for vesicle formation, movement, tethering and fusion. The sequence is that of Ras-related protein Rab-36 from Homo sapiens (Human).